The sequence spans 553 residues: Urocanate hydratase (553 aa).

NAD(+) contacts are provided by residues 45–46, Gln123, 169–171, Asp189, Arg194, 235–236, 256–260, 266–267, Tyr315, and Gly485; these read GG, GMG, NA, QTSAH, and YV.

Belongs to the urocanase family. It depends on NAD(+) as a cofactor.

The protein localises to the cytoplasm. It carries out the reaction 4-imidazolone-5-propanoate = trans-urocanate + H2O. It functions in the pathway amino-acid degradation; L-histidine degradation into L-glutamate; N-formimidoyl-L-glutamate from L-histidine: step 2/3. Catalyzes the conversion of urocanate to 4-imidazolone-5-propionate. The chain is Urocanate hydratase from Staphylococcus aureus (strain MRSA252).